Consider the following 494-residue polypeptide: Glutamyl-tRNA(Gln) amidotransferase subunit A (494 aa).

Catalysis depends on charge relay system residues Lys-79 and Ser-154. Residue Ser-178 is the Acyl-ester intermediate of the active site.

This sequence belongs to the amidase family. GatA subfamily. In terms of assembly, heterotrimer of A, B and C subunits.

It catalyses the reaction L-glutamyl-tRNA(Gln) + L-glutamine + ATP + H2O = L-glutaminyl-tRNA(Gln) + L-glutamate + ADP + phosphate + H(+). Functionally, allows the formation of correctly charged Gln-tRNA(Gln) through the transamidation of misacylated Glu-tRNA(Gln) in organisms which lack glutaminyl-tRNA synthetase. The reaction takes place in the presence of glutamine and ATP through an activated gamma-phospho-Glu-tRNA(Gln). This chain is Glutamyl-tRNA(Gln) amidotransferase subunit A, found in Clostridium kluyveri (strain NBRC 12016).